We begin with the raw amino-acid sequence, 226 residues long: Small ribosomal subunit protein uS3 (226 aa).

One can recognise a KH type-2 domain in the interval Ile39–Lys107.

Belongs to the universal ribosomal protein uS3 family. Part of the 30S ribosomal subunit. Forms a tight complex with proteins S10 and S14.

In terms of biological role, binds the lower part of the 30S subunit head. Binds mRNA in the 70S ribosome, positioning it for translation. The protein is Small ribosomal subunit protein uS3 of Acetivibrio thermocellus (strain ATCC 27405 / DSM 1237 / JCM 9322 / NBRC 103400 / NCIMB 10682 / NRRL B-4536 / VPI 7372) (Clostridium thermocellum).